Here is a 283-residue protein sequence, read N- to C-terminus: Shikimate dehydrogenase (NADP(+)) (283 aa).

Residues 19 to 21 (SLS) and T66 each bind shikimate. Residue K70 is the Proton acceptor of the active site. Shikimate contacts are provided by N91 and D106. NADP(+) contacts are provided by residues 129 to 133 (GAGGA), 153 to 158 (NRTPEK), and L224. Y226 is a shikimate binding site. Residue G247 participates in NADP(+) binding.

Belongs to the shikimate dehydrogenase family. In terms of assembly, homodimer.

It catalyses the reaction shikimate + NADP(+) = 3-dehydroshikimate + NADPH + H(+). It functions in the pathway metabolic intermediate biosynthesis; chorismate biosynthesis; chorismate from D-erythrose 4-phosphate and phosphoenolpyruvate: step 4/7. Its function is as follows. Involved in the biosynthesis of the chorismate, which leads to the biosynthesis of aromatic amino acids. Catalyzes the reversible NADPH linked reduction of 3-dehydroshikimate (DHSA) to yield shikimate (SA). This is Shikimate dehydrogenase (NADP(+)) from Methanothermobacter thermautotrophicus (strain ATCC 29096 / DSM 1053 / JCM 10044 / NBRC 100330 / Delta H) (Methanobacterium thermoautotrophicum).